The following is a 293-amino-acid chain: Probable E3 ubiquitin-protein ligase RNF144A-B (293 aa).

Residues proline 16–leucine 237 are TRIAD supradomain. Residues cysteine 20, cysteine 23, cysteine 43, cysteine 46, cysteine 111, cysteine 116, cysteine 135, cysteine 138, cysteine 143, cysteine 146, histidine 151, cysteine 156, cysteine 186, and cysteine 189 each coordinate Zn(2+). The RING-type 1 zinc-finger motif lies at cysteine 20 to cysteine 70. The segment at glutamine 91–cysteine 156 adopts an IBR-type zinc-finger fold. Residues cysteine 186–cysteine 215 form an RING-type 2; atypical zinc finger. Cysteine 199 is an active-site residue. 6 residues coordinate Zn(2+): cysteine 204, cysteine 207, cysteine 212, cysteine 215, histidine 227, and cysteine 233. Residues valine 251 to leucine 271 form a helical membrane-spanning segment.

The protein belongs to the RBR family. RNF144 subfamily.

The protein resides in the membrane. The enzyme catalyses [E2 ubiquitin-conjugating enzyme]-S-ubiquitinyl-L-cysteine + [acceptor protein]-L-lysine = [E2 ubiquitin-conjugating enzyme]-L-cysteine + [acceptor protein]-N(6)-ubiquitinyl-L-lysine.. It functions in the pathway protein modification; protein ubiquitination. Its function is as follows. E3 ubiquitin-protein ligase which accepts ubiquitin from E2 ubiquitin-conjugating enzymes ube2l3 and ube2l6 in the form of a thioester and then directly transfers the ubiquitin to targeted substrates. This Danio rerio (Zebrafish) protein is Probable E3 ubiquitin-protein ligase RNF144A-B (rnf144ab).